Consider the following 427-residue polypeptide: rRNA-processing protein EBP2 (427 aa).

Composition is skewed to basic and acidic residues over residues 29–40 and 49–65; these read KKKSQELKKEEP and KKLEKKEKKADVKKEVA. Positions 29–190 are disordered; sequence KKKSQELKKE…FDSDADVVPH (162 aa). A coiled-coil region spans residues 45–174; the sequence is ASNLKKLEKK…KEEQEEEQDV (130 aa). Over residues 79–88 the composition is skewed to basic residues; the sequence is KEKRKLKKEL. Residues 89–105 show a composition bias toward basic and acidic residues; that stretch reads KKMQEQDATEAQKHMSG. S104 is subject to Phosphoserine. Acidic residues predominate over residues 106-126; the sequence is DEDESGDDREEEEEEEEEEEG. Basic and acidic residues predominate over residues 127–138; that stretch reads RLDLEKLAKSDS. 2 stretches are compositionally biased toward acidic residues: residues 139-155 and 163-185; these read ESEDDSESENDSEEDED and EEKEEQEEEQDVPLSDVEFDSDA. Phosphoserine occurs at positions 177 and 183. 2 coiled-coil regions span residues 234-265 and 291-348; these read KDIYDDTERELAFYKQSLDAVLVARDELKRLK and KLIE…KHNE. Residues 361–427 are disordered; sequence EVEGKRFDRG…PGKSRRARRF (67 aa). Over residues 397 to 407 the composition is skewed to polar residues; that stretch reads ATSSADVSGFS. Basic residues predominate over residues 409–427; it reads RKMKGKTNRPGKSRRARRF.

This sequence belongs to the EBP2 family. As to quaternary structure, interacts with LOC1, NOP12, SIZ2, ULS1 and WSS1. Post-translationally, sumoylated.

It localises to the nucleus. The protein localises to the nucleolus. Its function is as follows. Required for the processing of the 27S pre-rRNA. Probably involved in the step of the processing of the 27 SA precursor into the 27 SB intermediate. The polypeptide is rRNA-processing protein EBP2 (EBP2) (Saccharomyces cerevisiae (strain ATCC 204508 / S288c) (Baker's yeast)).